A 359-amino-acid chain; its full sequence is Diacyltrehalose acyltransferase Chp2 (359 aa).

Residues 4-24 form a helical membrane-spanning segment; that stretch reads VIAGAFAVWLVGWAGGFGTAI. Residues 79-316 enclose the PE-PPE domain; it reads PNAKHDLIDY…VLQPQIDAAY (238 aa).

Belongs to the mycobacterial PPE family.

Its subcellular location is the cell inner membrane. Activity is probably potentiated by the DAT/PAT transporter MmpL10. Inhibited by the lipase inhibitor tetrahydrolipstatin (THL). In terms of biological role, involved in the final steps of polyacyltrehalose (PAT) biosynthesis. Catalyzes the transfer of three mycolipenoyl groups onto diacyltrehalose (DAT) to form PAT. The protein is Diacyltrehalose acyltransferase Chp2 of Mycobacterium tuberculosis (strain ATCC 25618 / H37Rv).